The following is a 239-amino-acid chain: Protein Thf1 (239 aa).

Residues 183 to 221 adopt a coiled-coil conformation; sequence ERVRKDLELYRSSLDRMKQARAVVEEMVKAARRQQERRQ. Over residues 211-221 the composition is skewed to basic and acidic residues; sequence KAARRQQERRQ. The tract at residues 211–239 is disordered; the sequence is KAARRQQERRQSAASLPETSLGDPSKPGS.

This sequence belongs to the THF1 family.

In terms of biological role, may be involved in photosynthetic membrane biogenesis. This Synechococcus sp. (strain JA-2-3B'a(2-13)) (Cyanobacteria bacterium Yellowstone B-Prime) protein is Protein Thf1.